The sequence spans 102 residues: Biotrophy-associated secreted protein 2 (102 aa).

The signal sequence occupies residues 1–19 (MVRVSTFAAILAMALSVTA). A glycan (N-linked (GlcNAc...) asparagine) is linked at asparagine 46.

Its subcellular location is the secreted. Its function is as follows. Secreted effector involved in biotrophic colonization of plant cells. The protein is Biotrophy-associated secreted protein 2 of Pyricularia oryzae (strain 70-15 / ATCC MYA-4617 / FGSC 8958) (Rice blast fungus).